Reading from the N-terminus, the 84-residue chain is ATP synthase subunit c (84 aa).

A run of 2 helical transmembrane segments spans residues 10–30 (IAVA…FAIL) and 53–73 (FIVA…ALFF).

The protein belongs to the ATPase C chain family. In terms of assembly, F-type ATPases have 2 components, F(1) - the catalytic core - and F(0) - the membrane proton channel. F(1) has five subunits: alpha(3), beta(3), gamma(1), delta(1), epsilon(1). F(0) has three main subunits: a(1), b(2) and c(10-14). The alpha and beta chains form an alternating ring which encloses part of the gamma chain. F(1) is attached to F(0) by a central stalk formed by the gamma and epsilon chains, while a peripheral stalk is formed by the delta and b chains.

It is found in the cell inner membrane. In terms of biological role, f(1)F(0) ATP synthase produces ATP from ADP in the presence of a proton or sodium gradient. F-type ATPases consist of two structural domains, F(1) containing the extramembraneous catalytic core and F(0) containing the membrane proton channel, linked together by a central stalk and a peripheral stalk. During catalysis, ATP synthesis in the catalytic domain of F(1) is coupled via a rotary mechanism of the central stalk subunits to proton translocation. Key component of the F(0) channel; it plays a direct role in translocation across the membrane. A homomeric c-ring of between 10-14 subunits forms the central stalk rotor element with the F(1) delta and epsilon subunits. This Shewanella putrefaciens (strain CN-32 / ATCC BAA-453) protein is ATP synthase subunit c.